Here is a 606-residue protein sequence, read N- to C-terminus: MSDTSESGAGLTRFQAEASEKDSSSMMQTLLTVTQNVEVPETLKASKALEVSEDVKVSKASGVSKATEVSKTPEAQEAPATQASSTTQLTDTQVLATENKSVAADTKKQNADPQAVTMPATETKKVSHVADTKVNTKAQETEAAPSQASADEPEPESAAAQSQENQDTRPKVKAKKARKVKHLDGEEDGSSDQSQASGTTGGRRVSKALMASMARRASRGPIAFWARRASRTRLAAWARRALLSLRSPKARRGKARRRAAKLQSSQEPEAPPPRDVALLQGRANDLVKYLLAKDQTKIPIKRSDMLKDIIKEYTDVYPEIIERAGYSLEKVFGIQLKEIDKNDHLYILLSTLEPTDAGILGTTKDSPKLGLLMVLLSIIFMNGNRSSEAVIWEVLRKLGLRPGIHHSLFGDVKKLITDEFVKQKYLDYARVPNSNPPEYEFFWGLRSYYETSKMKVLKFACKVQKKDPKEWAAQYREAMEADLKAAAEAAAEAKARAEIRARMGIGLGSENAAGPCNWDEADIGPWAKARIQAGAEAKAKAQESGSASTGASTSTNNSASASASTSGGFSAGASLTATLTFGLFAGLGGAGASTSGSSGACGFSYK.

Disordered regions lie at residues 1 to 29 (MSDT…MMQT) and 52 to 204 (SEDV…GGRR). Position 2 is an N-acetylserine (Ser2). A Phosphoserine modification is found at Ser5. Phosphothreonine is present on Thr72. A compositionally biased stretch (polar residues) spans 79 to 100 (PATQASSTTQLTDTQVLATENK). The segment covering 122–131 (ETKKVSHVAD) has biased composition (basic and acidic residues). Residues 142–164 (EAAPSQASADEPEPESAAAQSQE) are compositionally biased toward low complexity. Ser157 carries the post-translational modification Phosphoserine. Positions 171-181 (KVKAKKARKVK) are enriched in basic residues. Phosphoserine is present on residues Ser190, Ser191, Ser194, Ser197, Ser244, and Ser247. A compositionally biased stretch (basic residues) spans 248-260 (PKARRGKARRRAA). The tract at residues 248–275 (PKARRGKARRRAAKLQSSQEPEAPPPRD) is disordered. 2 positions are modified to phosphoserine: Ser264 and Ser265. Residues 279-478 (LQGRANDLVK…KEWAAQYREA (200 aa)) form the MAGE domain. Positions 534–563 (GAEAKAKAQESGSASTGASTSTNNSASASA) are disordered.

Interacts with GNAS.

Its function is as follows. Regulates the expression, localization to the plasma membrane and function of the sodium chloride cotransporters SLC12A1 and SLC12A3, two key components of salt reabsorption in the distal renal tubule. The sequence is that of Melanoma-associated antigen D2 (MAGED2) from Pongo abelii (Sumatran orangutan).